The primary structure comprises 256 residues: Acetyl-coenzyme A carboxylase carboxyl transferase subunit alpha (256 aa).

The CoA carboxyltransferase C-terminal domain maps to 1–236 (MTDVARILKE…KSHLIDEITQ (236 aa)).

The protein belongs to the AccA family. Acetyl-CoA carboxylase is a heterohexamer composed of biotin carboxyl carrier protein (AccB), biotin carboxylase (AccC) and two subunits each of ACCase subunit alpha (AccA) and ACCase subunit beta (AccD).

It localises to the cytoplasm. The catalysed reaction is N(6)-carboxybiotinyl-L-lysyl-[protein] + acetyl-CoA = N(6)-biotinyl-L-lysyl-[protein] + malonyl-CoA. It functions in the pathway lipid metabolism; malonyl-CoA biosynthesis; malonyl-CoA from acetyl-CoA: step 1/1. Functionally, component of the acetyl coenzyme A carboxylase (ACC) complex. First, biotin carboxylase catalyzes the carboxylation of biotin on its carrier protein (BCCP) and then the CO(2) group is transferred by the carboxyltransferase to acetyl-CoA to form malonyl-CoA. In Streptococcus equi subsp. equi (strain 4047), this protein is Acetyl-coenzyme A carboxylase carboxyl transferase subunit alpha.